A 45-amino-acid polypeptide reads, in one-letter code: Metallothionein-like protein 1C (45 aa).

This sequence belongs to the metallothionein superfamily. Type 15 family. In terms of tissue distribution, widely expressed at low levels.

Metallothioneins have a high content of cysteine residues that bind various heavy metals. Confers tolerance to cadmium (Cd) and plays a role in Cd and zinc (Zn) homeostasis. This Arabidopsis thaliana (Mouse-ear cress) protein is Metallothionein-like protein 1C (MT1C).